The chain runs to 30 residues: Acyl-CoA-binding protein 1 (30 aa).

The span at 1-15 (ALKDEFEEHAEKAKT) shows a compositional bias: basic and acidic residues. The segment at 1–30 (ALKDEFEEHAEKAKTLPENTSNENKLILYG) is disordered. Residues 2-30 (LKDEFEEHAEKAKTLPENTSNENKLILYG) enclose the ACB domain.

This sequence belongs to the ACBP family.

The protein resides in the cytoplasm. Functionally, binds medium- and long-chain acyl-CoA esters with very high affinity and may function as an intracellular carrier of acyl-CoA esters. The protein is Acyl-CoA-binding protein 1 of Digitalis lanata (Grecian foxglove).